The primary structure comprises 168 residues: MSVCTSPSDEGLTRRLIELTEAGLPLVADPWAWLAEELGIDVDDTLALLQRLQADGAIRRVAAIPNHYRLGYRHNGMTVWDVDDAEIARLGALIGAQPFVSHCYRRPRQEGWPYNLFAMVHGRDASDIEAYRNQIRALLGNACRANDMLVSSRILKKTGLRLAGQRRV.

This sequence belongs to the Ahb/Nir family. In terms of assembly, probably forms a complex composed of NirD, NirL, NirG and NirH. All proteins are required for the total conversion of siroheme to didecarboxysiroheme.

It carries out the reaction siroheme + 2 H(+) = 12,18-didecarboxysiroheme + 2 CO2. It functions in the pathway porphyrin-containing compound metabolism. In terms of biological role, involved in heme d1 biosynthesis. Catalyzes the decarboxylation of siroheme into didecarboxysiroheme. This Stutzerimonas stutzeri (Pseudomonas stutzeri) protein is Siroheme decarboxylase NirH subunit.